The primary structure comprises 1091 residues: Rho GTPase-activating protein 7 (1091 aa).

The SAM domain occupies 11–78 (LTQIEAKEAC…LNKCAVMKLE (68 aa)). Serine 86, serine 89, and serine 129 each carry phosphoserine. Disordered regions lie at residues 120–181 (SPKQ…TTPR), 296–329 (RSVS…TRSL), 402–439 (RTGS…SSRM), and 491–552 (SDEG…SGVG). Positions 130–143 (PDNSRLQSATSRES) are enriched in polar residues. Composition is skewed to low complexity over residues 155 to 166 (SSIRSLSSTSSS) and 298 to 324 (VSNS…SPVT). Residues 274 to 447 (QLNCVEISAL…RMSIYDNVPG (174 aa)) form a focal adhesion-targeting (FAT) region. The residue at position 321 (serine 321) is a Phosphoserine. The span at 414 to 425 (LRRENSSDSPKE) shows a compositional bias: basic and acidic residues. Positions 499 to 511 (ALDSVSPCPSSPK) are enriched in polar residues. Basic and acidic residues predominate over residues 513 to 525 (IHLDVDHDRRTPS). The span at 526 to 535 (DLDSTGNSLN) shows a compositional bias: polar residues. A polybasic cluster (PBR) region spans residues 614–636 (KHGFSWAVPKFMKRIKVPDYKDR). Residues 641–847 (VPLTVNVQRS…HMIAECKKLF (207 aa)) enclose the Rho-GAP domain. One can recognise an START domain in the interval 877–1084 (SNDQPADYRH…RDSFSNQSTE (208 aa)).

In terms of assembly, interacts with EF1A1, facilitates EF1A1 distribution to the membrane periphery and ruffles upon growth factor stimulation and suppresses cell migration. Interacts with tensin TNS1 (via N-terminus); the interaction is decreased by phosphorylation of TNS1. Interacts with TNS3 and PTEN; in resting cells, interacts with TNS3 (via C2 tensin-type domain) but, following growth factor stimulation, TNS3 and PTEN are phosphorylated which leads to weakened interaction with TNS3 and enhanced interaction with PTEN. Interacts (via C-terminus) with tensin TNS4 (via SH2 domain); the interaction is independent of tyrosine phosphorylation of DLC1.

It localises to the cytoplasm. The protein resides in the cell junction. Its subcellular location is the focal adhesion. It is found in the membrane. Functionally, functions as a GTPase-activating protein for the small GTPases RHOA, RHOB, RHOC and CDC42, terminating their downstream signaling. This induces morphological changes and detachment through cytoskeletal reorganization, playing a critical role in biological processes such as cell migration and proliferation. Also functions in vivo as an activator of the phospholipase PLCD1. Active DLC1 increases cell migration velocity but reduces directionality. Required for growth factor-induced epithelial cell migration; in resting cells, interacts with TNS3 while PTEN interacts with the p85 regulatory subunit of the PI3K kinase complex but growth factor stimulation induces phosphorylation of TNS3 and PTEN, causing them to change their binding preference so that PTEN interacts with DLC1 and TNS3 interacts with p85. The PTEN-DLC1 complex translocates to the posterior of migrating cells to activate RHOA while the TNS3-p85 complex translocates to the leading edge of migrating cells to promote RAC1 activation. In Rattus norvegicus (Rat), this protein is Rho GTPase-activating protein 7 (Dlc1).